A 355-amino-acid polypeptide reads, in one-letter code: MRVADFSFELPESLIAHYPQAERSGCRLLSLDGPTGDLTHGVFTDLLDKLNPGDLLVFNNTRVIPARLFGRKVSGGKLEVLVERVLDDHRVLAHVRASKAPKPGTELLLGDDESVKATMAARHDALFELHFDDSRDVLSILNDIGHMPLPPYIDRPDEDADRELYQTVYSQRPGAVAAPTAGLHFDEPMLAALREKGIEMAFVTLHVGAGTFQPVRVDTIEDHIMHAEYAEVPQDVVDAVLACKARGNRVIAVGTTSVRSLESAAQASQNAPIEPFFGDTKIFIYPGYHYRIIDALVTNFHLPESTLIMLVSAFAGYQNTMSAYRQAVAEQYRFFSYGDAMFITHNPMAEQEKVG.

This sequence belongs to the QueA family. Monomer.

Its subcellular location is the cytoplasm. It catalyses the reaction 7-aminomethyl-7-carbaguanosine(34) in tRNA + S-adenosyl-L-methionine = epoxyqueuosine(34) in tRNA + adenine + L-methionine + 2 H(+). It participates in tRNA modification; tRNA-queuosine biosynthesis. In terms of biological role, transfers and isomerizes the ribose moiety from AdoMet to the 7-aminomethyl group of 7-deazaguanine (preQ1-tRNA) to give epoxyqueuosine (oQ-tRNA). The chain is S-adenosylmethionine:tRNA ribosyltransferase-isomerase from Pectobacterium carotovorum subsp. carotovorum (strain PC1).